The primary structure comprises 390 residues: UPF0496 protein At1g20180 (390 aa).

2 helical membrane-spanning segments follow: residues 228-248 (LGGY…LIIA) and 250-270 (HSIL…FCLL).

This sequence belongs to the UPF0496 family.

It localises to the membrane. The chain is UPF0496 protein At1g20180 from Arabidopsis thaliana (Mouse-ear cress).